We begin with the raw amino-acid sequence, 363 residues long: Diheme-cytochrome-encapsulin shell fusion protein (363 aa).

An N-terminal signal peptide occupies residues 1–36 (MVMGILNTFKKVYAVTGFFALLAVFSLSQVGSSAFA). The tract at residues 37-74 (ACAKVDDCFSCHTTQELNAVHKNTPYQGQSCIVCHKAF) is diheme c-type cytochrome. Heme-binding residues include cysteine 44, cysteine 47, histidine 48, cysteine 67, cysteine 70, and histidine 71. The tract at residues 75–94 (AADDTCSDAKDGRFAKISSE) is linker. The encapsulin domain stretch occupies residues 95-363 (ININKEDWNK…KCPQAICTLE (269 aa)).

Belongs to the encapsulin family. Family 1 subfamily. The encapsulin nanocompartment is probably formed by 180 monomers, with the N-terminus (diheme domain) inside. There are 36 pores where the pentamers meet as well as 3-fold axis channels and dimer channels. It depends on heme as a cofactor.

It is found in the encapsulin nanocompartment. Its function is as follows. Fusion of the shell and cargo protein of a type 1 encapsulin nanocompartment. Protein missing its signal peptide makes 33 nm particles in E.coli (called cEnc), protein missing its signal peptide and diheme domain (residues 1-86, called Enc) makes 29 nm particles. The cEnc nancompartment encloses c-type heme. The cargo protein NIR-HAO (AC P0DV45) is probably targeted to the nanocompartment by its association with the diheme domain in cEnc; removal of the diheme domain in Enc halves the amount of cargo. The chain is Diheme-cytochrome-encapsulin shell fusion protein from Kuenenia stuttgartiensis.